We begin with the raw amino-acid sequence, 385 residues long: Tumor protein p53-inducible protein 13 (385 aa).

The N-terminal stretch at Met1–Ala27 is a signal peptide. Topologically, residues Glu28–Glu301 are extracellular. A disordered region spans residues Ala242–Pro297. Residues Pro281–Pro297 show a composition bias toward low complexity. Residues Ala302–Cys322 traverse the membrane as a helical segment. The Cytoplasmic segment spans residues Thr323–Asp385. Positions Ser359–Pro369 are enriched in basic residues. The segment at Ser359–Asp385 is disordered.

The protein localises to the cell membrane. It localises to the cytoplasm. Functionally, may act as a tumor suppressor. Inhibits tumor cell growth, when overexpressed. This Mus musculus (Mouse) protein is Tumor protein p53-inducible protein 13 (Tp53i13).